Here is a 90-residue protein sequence, read N- to C-terminus: MYEHRPPSLETNSFSSTRRLFSNSDWCCKDPGRSKLTNMVNSCTLLTIGVADKQIILWFFNAMVLDKKLYTERVGRILPSSLINDLEMKL.

This is an uncharacterized protein from Bos taurus (Bovine).